A 180-amino-acid polypeptide reads, in one-letter code: Large ribosomal subunit protein uL6 (180 aa).

It belongs to the universal ribosomal protein uL6 family. As to quaternary structure, part of the 50S ribosomal subunit.

This protein binds to the 23S rRNA, and is important in its secondary structure. It is located near the subunit interface in the base of the L7/L12 stalk, and near the tRNA binding site of the peptidyltransferase center. The protein is Large ribosomal subunit protein uL6 of Borrelia duttonii (strain Ly).